The primary structure comprises 774 residues: Neprilysin-2 (774 aa).

Topologically, residues 1–20 are cytoplasmic; that stretch reads MQTVIQNPNWWRRRNKLEKS. Residues 21–41 form a helical; Signal-anchor for type II membrane protein membrane-spanning segment; that stretch reads LLVSLGIMFVVLATGFGLWIG. The Extracellular portion of the chain corresponds to 42 to 774; sequence KVLRTSPPSN…MNPVQKCEVW (733 aa). The segment at 50–79 is disordered; that stretch reads SNPQATALHGDSTTINQVPTGTASKGKSGD. The segment covering 60–74 has biased composition (polar residues); sequence DSTTINQVPTGTASK. The Peptidase M13 domain occupies 83 to 774; sequence VCLTQECIHT…MNPVQKCEVW (692 aa). 5 cysteine pairs are disulfide-bonded: Cys84-Cys89, Cys107-Cys759, Cys115-Cys719, Cys171-Cys424, and Cys646-Cys771. N-linked (GlcNAc...) asparagine glycans are attached at residues Asn173, Asn239, Asn264, Asn305, Asn315, Asn358, and Asn554. Zn(2+) is bound at residue His609. Residue Glu610 is part of the active site. His613 contributes to the Zn(2+) binding site. Asn653 carries an N-linked (GlcNAc...) asparagine glycan. A Zn(2+)-binding site is contributed by Glu671. Asp675 acts as the Proton donor in catalysis.

Belongs to the peptidase M13 family. The cofactor is Zn(2+). N-glycosylated. Post-translationally, the soluble form is probably produced by proteolytic cleavage. As to expression, detected in the stellate cells in the main segment and the bar-shaped cells in the initial segment of male and female Malpighian tubules (at protein level). Expressed in the spermatheca (at protein level). Expressed in the somatic cyst cells of the testes, with increased expression at the tail end of elongating cysts. Expressed in the ovaries with strong expression in the posterior polar cells and in border cells of stage 8, 9, and 10 follicles. In adults and third-instar larvae, expressed in the brain, ventral ganglion, and stellate cells. Also expressed in the foregut and the imaginal disks (eye, antennal and leg) of third-instar larvae. In stage 17 embryos, expressed in the tracheal system, foregut, hindgut and epidermis. Also expressed in the stellate cell progenitors of the caudal visceral mesoderm in embryos.

It localises to the cell membrane. Its subcellular location is the secreted. The catalysed reaction is Preferential cleavage of polypeptides between hydrophobic residues, particularly with Phe or Tyr at P1'.. Its function is as follows. Metalloendoprotease which cleaves peptides such as tachykinin peptide TK-2 at the amino side of hydrophobic residues. Functions in female fertility, embryogenesis and memory formation. Required in females for normal patterns of egg laying, probably due to its function in sperm retention and preventing sperm displacement by rival ejaculates. Also required for normal patterns of hatching due to its important role in early embryonic development. Required in the dorsal paired medial neurons for the proper formation of middle-term memory. Also required in the mushroom body neurons where it functions redundantly with neprilysins Nep3 and Nep4 in normal long-term memory formation. This chain is Neprilysin-2, found in Drosophila melanogaster (Fruit fly).